The following is a 199-amino-acid chain: Probable chemoreceptor glutamine deamidase CheD (199 aa).

It belongs to the CheD family.

The enzyme catalyses L-glutaminyl-[protein] + H2O = L-glutamyl-[protein] + NH4(+). Functionally, probably deamidates glutamine residues to glutamate on methyl-accepting chemotaxis receptors (MCPs), playing an important role in chemotaxis. In Nitratidesulfovibrio vulgaris (strain ATCC 29579 / DSM 644 / CCUG 34227 / NCIMB 8303 / VKM B-1760 / Hildenborough) (Desulfovibrio vulgaris), this protein is Probable chemoreceptor glutamine deamidase CheD.